The chain runs to 367 residues: Uroporphyrinogen decarboxylase (367 aa).

Substrate-binding positions include 28-32 (RQAGR), aspartate 78, tyrosine 158, threonine 213, and histidine 334.

The protein belongs to the uroporphyrinogen decarboxylase family. As to quaternary structure, homodimer.

It localises to the cytoplasm. It carries out the reaction uroporphyrinogen III + 4 H(+) = coproporphyrinogen III + 4 CO2. Its pathway is porphyrin-containing compound metabolism; protoporphyrin-IX biosynthesis; coproporphyrinogen-III from 5-aminolevulinate: step 4/4. Functionally, catalyzes the decarboxylation of four acetate groups of uroporphyrinogen-III to yield coproporphyrinogen-III. This Ralstonia pickettii (strain 12J) protein is Uroporphyrinogen decarboxylase.